The following is a 322-amino-acid chain: uncharacterized protein (322 aa).

The first 27 residues, 1–27, serve as a signal peptide directing secretion; it reads MKRLFWNLKHKKAWLVLLLGTGMILSS. Cys28 carries N-palmitoyl cysteine lipidation. Cys28 is lipidated: S-diacylglycerol cysteine. Positions 235 to 254 are enriched in polar residues; it reads DNSTNPNAPGSGQGDSTPPA. The interval 235 to 298 is disordered; sequence DNSTNPNAPG…AVQRSQKSYG (64 aa). The span at 257–267 shows a compositional bias: gly residues; that stretch reads GEGGGSDGSSG. Residues 274–296 show a composition bias toward polar residues; that stretch reads NGQNTTPTSPQSSQPAVQRSQKS.

Its subcellular location is the cell membrane. This is an uncharacterized protein from Mycoplasma genitalium (strain ATCC 33530 / DSM 19775 / NCTC 10195 / G37) (Mycoplasmoides genitalium).